Reading from the N-terminus, the 382-residue chain is Lipid-A-disaccharide synthase (382 aa).

This sequence belongs to the LpxB family.

The enzyme catalyses 2-N,3-O-bis[(3R)-3-hydroxytetradecanoyl]-alpha-D-glucosaminyl 1-phosphate + UDP-2-N,3-O-bis[(3R)-3-hydroxytetradecanoyl]-alpha-D-glucosamine = lipid A disaccharide (E. coli) + UDP + H(+). It catalyses the reaction a lipid X + a UDP-2-N,3-O-bis[(3R)-3-hydroxyacyl]-alpha-D-glucosamine = a lipid A disaccharide + UDP + H(+). It participates in glycolipid biosynthesis; lipid IV(A) biosynthesis; lipid IV(A) from (3R)-3-hydroxytetradecanoyl-[acyl-carrier-protein] and UDP-N-acetyl-alpha-D-glucosamine: step 5/6. In terms of biological role, condensation of UDP-2,3-diacylglucosamine and 2,3-diacylglucosamine-1-phosphate to form lipid A disaccharide, a precursor of lipid A, a phosphorylated glycolipid that anchors the lipopolysaccharide to the outer membrane of the cell. The protein is Lipid-A-disaccharide synthase of Escherichia coli (strain ATCC 8739 / DSM 1576 / NBRC 3972 / NCIMB 8545 / WDCM 00012 / Crooks).